Reading from the N-terminus, the 291-residue chain is Glycine--tRNA ligase alpha subunit (291 aa).

It belongs to the class-II aminoacyl-tRNA synthetase family. As to quaternary structure, tetramer of two alpha and two beta subunits.

The protein localises to the cytoplasm. The enzyme catalyses tRNA(Gly) + glycine + ATP = glycyl-tRNA(Gly) + AMP + diphosphate. The protein is Glycine--tRNA ligase alpha subunit of Microcystis aeruginosa (strain NIES-843 / IAM M-2473).